The sequence spans 404 residues: Phosphopentomutase (404 aa).

Residues Asp10, Asp297, His302, Asp338, His339, and His350 each coordinate Mn(2+).

This sequence belongs to the phosphopentomutase family. The cofactor is Mn(2+).

It is found in the cytoplasm. It carries out the reaction 2-deoxy-alpha-D-ribose 1-phosphate = 2-deoxy-D-ribose 5-phosphate. The catalysed reaction is alpha-D-ribose 1-phosphate = D-ribose 5-phosphate. It participates in carbohydrate degradation; 2-deoxy-D-ribose 1-phosphate degradation; D-glyceraldehyde 3-phosphate and acetaldehyde from 2-deoxy-alpha-D-ribose 1-phosphate: step 1/2. In terms of biological role, isomerase that catalyzes the conversion of deoxy-ribose 1-phosphate (dRib-1-P) and ribose 1-phosphate (Rib-1-P) to deoxy-ribose 5-phosphate (dRib-5-P) and ribose 5-phosphate (Rib-5-P), respectively. The polypeptide is Phosphopentomutase (Colwellia psychrerythraea (strain 34H / ATCC BAA-681) (Vibrio psychroerythus)).